Reading from the N-terminus, the 596-residue chain is Nuclear receptor subfamily 2 group C member 2 (596 aa).

Ser-19 bears the Phosphoserine; by MAPK mark. Ser-46 carries the phosphoserine modification. 2 positions are modified to phosphoserine; by MAPK: Ser-55 and Ser-68. Ser-98 is subject to Phosphoserine. A DNA-binding region (nuclear receptor) is located at residues 114–189; sequence VEYCVVCGDK…MGMKMESVQS (76 aa). 2 consecutive NR C4-type zinc fingers follow at residues 117 to 137 and 153 to 177; these read CVVCGDKASGRHYGAVSCEGC and CRSSQDCIINKHHRNRCQFCRLKKC. Lys-192 is covalently cross-linked (Glycyl lysine isopeptide (Lys-Gly) (interchain with G-Cter in SUMO2)). Position 219 is a phosphoserine (Ser-219). The residue at position 231 (Lys-231) is an N6-acetyllysine. In terms of domain architecture, NR LBD spans 341–583; that stretch reads GSIHVISRDQ…SIIPYILKME (243 aa).

The protein belongs to the nuclear hormone receptor family. NR2 subfamily. In terms of assembly, homodimer; can bind DNA as homodimer. Heterodimer; binds DNA as a heterodimer with NR2C1 required for chromatin remodeling and for binding to promoter regions such as globin DR1 repeats. Interacts with NR2C2AP; the interaction represses selective NR2C2-mediated transcriptional activity. Interacts with PCAF; the interaction preferentially occurs on the non-phosphorylated form and induces NR2C2-mediated transactivation activity and does not require the ligand-binding domain. Interacts (MAPK-mediated phosphorylated form) with NRIP1; the interaction promotes repression of NR2C2-mediated activity. Interacts with NLRP10. Interacts (via ligand-binding region) with transcriptional corepressor JAZF1; the interaction promotes NR2C2-mediated transcriptional repression. In terms of processing, phosphorylation on Ser-19 and Ser-68 is an important regulator of NR2C2-mediated transcriptional activity. Phosphorylation on these residues recruits the corepressor, NRIP1, leading to transcripional repression, whereas the non-phosphorylated form preferentially recruits the coactivator, PCAF. As to expression, expressed, during embryogenesis, in perichondrium, developing glomeruli structures and tubules of kidney, as well as in intestiinal villi. Also expressed in lung and hair follicles.

The protein localises to the nucleus. Orphan nuclear receptor that can act as a repressor or activator of transcription. An important repressor of nuclear receptor signaling pathways such as retinoic acid receptor, retinoid X, vitamin D3 receptor, thyroid hormone receptor and estrogen receptor pathways. May regulate gene expression during the late phase of spermatogenesis. Activates transcriptional activity of LHCG and is antagonist of PPARA-mediated transactivation. Together with NR2C1, forms the core of the DRED (direct repeat erythroid-definitive) complex that represses embryonic and fetal globin transcription including that of GATA1. Binds to hormone response elements (HREs) consisting of two 5'-AGGTCA-3' half site direct repeat consensus sequences. Plays a fundamental role in early embryonic development and embryonic stem cells. Required for normal spermatogenesis and cerebellum development. Appears to be important for neurodevelopmentally regulated behavior. The chain is Nuclear receptor subfamily 2 group C member 2 (Nr2c2) from Mus musculus (Mouse).